The primary structure comprises 365 residues: Class I histocompatibility antigen, Gogo-A*0201 alpha chain (365 aa).

The N-terminal stretch at 1-24 (MAVMAPRTLLLLLLGALALTQTWA) is a signal peptide. The segment at 25–114 (GSHSMRYFST…LRGYYNQSEA (90 aa)) is alpha-1. Residues 25-308 (GSHSMRYFST…EPSSQPTIPI (284 aa)) lie on the Extracellular side of the membrane. Asn-110 carries N-linked (GlcNAc...) asparagine glycosylation. The interval 115 to 206 (GSHTIQKMYG…ENGKETLQRT (92 aa)) is alpha-2. 2 disulfide bridges follow: Cys-125-Cys-188 and Cys-227-Cys-283. The tract at residues 207-298 (DAPKTHMTHH…SLPKPLTLRW (92 aa)) is alpha-3. The Ig-like C1-type domain occupies 209–295 (PKTHMTHHAV…QHESLPKPLT (87 aa)). A connecting peptide region spans residues 299-308 (EPSSQPTIPI). The chain crosses the membrane as a helical span at residues 309–332 (VGIIAGLVLFGAVIAGAVIAAVRW). At 333-365 (RRKSSDRKGGSYSQAASSDSAQGSDVSLTACKV) the chain is on the cytoplasmic side. Residues 338 to 365 (DRKGGSYSQAASSDSAQGSDVSLTACKV) form a disordered region. The span at 342 to 359 (GSYSQAASSDSAQGSDVS) shows a compositional bias: low complexity. At Ser-343 the chain carries Phosphoserine. At Tyr-344 the chain carries Phosphotyrosine. Residues Ser-345, Ser-349, Ser-350, Ser-352, Ser-356, and Ser-359 each carry the phosphoserine modification.

Belongs to the MHC class I family. As to quaternary structure, heterodimer of an alpha chain and a beta chain (beta-2-microglobulin).

Its subcellular location is the membrane. Functionally, involved in the presentation of foreign antigens to the immune system. This Gorilla gorilla gorilla (Western lowland gorilla) protein is Class I histocompatibility antigen, Gogo-A*0201 alpha chain.